The following is a 444-amino-acid chain: Sonic hedgehog protein (444 aa).

Positions 1–24 (MLVATQSLLLLSFICTLVTPPGLA) are cleaved as a signal peptide. Cys-25 is lipidated: N-palmitoyl cysteine. The Cardin-Weintraub signature appears at 33 to 39 (KRRHPKK). The Ca(2+) site is built by Glu-90, Glu-91, Asp-96, Thr-126, Glu-127, Asp-130, and Asp-132. Residues His-141, Asp-148, and His-183 each contribute to the Zn(2+) site. Residue Gly-198 is the site of Cholesterol glycine ester attachment. Repeat copies occupy residues 386–393 (QVDLQSHH), 394–401 (QVDLQSHH), and 403–409 (VDLQSHH). The interval 386-409 (QVDLQSHHQVDLQSHHQVDLQSHH) is 3 X 8 AA tandem repeats of Q-V-D-L-Q-S-H-H.

It belongs to the hedgehog family. Interacts with HHATL/GUP1 which negatively regulates HHAT-mediated palmitoylation of the SHH N-terminus. Interacts with BOC and CDON. Interacts with HHIP. Interacts with DISP1 via its cholesterol anchor. Interacts with SCUBE2. In terms of assembly, multimer. In terms of processing, the C-terminal domain displays an autoproteolysis activity and a cholesterol transferase activity. Both activities result in the cleavage of the full-length protein and covalent attachment of a cholesterol moiety to the C-terminal of the newly generated N-terminal fragment (ShhN). Cholesterylation is required for the sonic hedgehog protein N-product targeting to lipid rafts and multimerization. ShhN is the active species in both local and long-range signaling, whereas the C-product (ShhC) is degraded in the reticulum endoplasmic. Post-translationally, N-palmitoylation by HHAT of ShhN is required for sonic hedgehog protein N-product multimerization and full activity. It is a prerequisite for the membrane-proximal positioning and the subsequent shedding of this N-terminal peptide. The lipidated N- and C-terminal peptides of ShhNp can be cleaved (shedding). The N-terminal palmitoylated peptide is cleaved at the Cardin-Weintraub (CW) motif site. The cleavage reduced the interactions with heparan sulfate. The cleavage is enhanced by SCUBE2. As to expression, strongly expressed in notochord and neural floor plate during embryogenesis. In tadpole, high expression is observed in pancreas/stomach, moderate expression in tail, and low expression in intestine, brain, and hind limb.

The protein resides in the endoplasmic reticulum membrane. Its subcellular location is the golgi apparatus membrane. The protein localises to the cell membrane. The enzyme catalyses glycyl-L-cysteinyl-[protein] + cholesterol + H(+) = [protein]-C-terminal glycyl cholesterol ester + N-terminal L-cysteinyl-[protein]. In terms of biological role, the C-terminal part of the sonic hedgehog protein precursor displays an autoproteolysis and a cholesterol transferase activity. Both activities result in the cleavage of the full-length protein into two parts (ShhN and ShhC) followed by the covalent attachment of a cholesterol moiety to the C-terminal of the newly generated ShhN. Both activities occur in the endoplasmic reticulum. Once cleaved, ShhC is degraded in the endoplasmic reticulum. Its function is as follows. The dually lipidated sonic hedgehog protein N-product (ShhNp) is a morphogen which is essential for a variety of patterning events during development. Induces ventral cell fate in the neural tube and somites. Involved in the patterning of the anterior-posterior axis of the developing limb bud. Essential for axon guidance. Binds to the patched (PTCH1) receptor, which functions in association with smoothened (SMO), to activate the transcription of target genes. In the absence of SHH, PTCH1 represses the constitutive signaling activity of SMO. The protein is Sonic hedgehog protein of Xenopus laevis (African clawed frog).